Consider the following 342-residue polypeptide: Biotin synthase (342 aa).

The region spanning 38 to 262 (GQVQISTLLS…MMPTSYVRLS (225 aa)) is the Radical SAM core domain. 3 residues coordinate [4Fe-4S] cluster: Cys-53, Cys-57, and Cys-60. Residues Cys-97, Cys-128, Cys-188, and Arg-260 each coordinate [2Fe-2S] cluster.

It belongs to the radical SAM superfamily. Biotin synthase family. As to quaternary structure, homodimer. It depends on [4Fe-4S] cluster as a cofactor. [2Fe-2S] cluster is required as a cofactor.

The catalysed reaction is (4R,5S)-dethiobiotin + (sulfur carrier)-SH + 2 reduced [2Fe-2S]-[ferredoxin] + 2 S-adenosyl-L-methionine = (sulfur carrier)-H + biotin + 2 5'-deoxyadenosine + 2 L-methionine + 2 oxidized [2Fe-2S]-[ferredoxin]. It participates in cofactor biosynthesis; biotin biosynthesis; biotin from 7,8-diaminononanoate: step 2/2. Catalyzes the conversion of dethiobiotin (DTB) to biotin by the insertion of a sulfur atom into dethiobiotin via a radical-based mechanism. The polypeptide is Biotin synthase (Baumannia cicadellinicola subsp. Homalodisca coagulata).